A 241-amino-acid chain; its full sequence is MGRGRVELKRIENKINRQVTFAKRRNGLLKKAYELSVLCDAEVALIIFSNRGKLYEFCSSSSMLKTLERYQKCNYGAPETNISTREALEISSQQEYLKLKARYEALQRSQRNLLGEDLGPLNSKELESLERQLDMSLKQIRSTRTQLMLDQLQDLQRKEHALNEANRTLKQRLMEGSTLNLQWQQNAQDVGYGRQATQTQGDGFFHPLECEPTLQIGYQNDPITVGGAGPSVNNYMAGWLP.

In terms of domain architecture, MADS-box spans 3–57; the sequence is RGRVELKRIENKINRQVTFAKRRNGLLKKAYELSVLCDAEVALIIFSNRGKLYEF. Residues 89–179 form the K-box domain; it reads EISSQQEYLK…KQRLMEGSTL (91 aa).

The protein resides in the nucleus. In terms of biological role, probable transcription factor. This chain is Agamous-like MADS-box protein AGL9 homolog (FBP2), found in Petunia hybrida (Petunia).